Here is a 357-residue protein sequence, read N- to C-terminus: Cobalt-precorrin-5B C(1)-methyltransferase (357 aa).

Belongs to the CbiD family.

It catalyses the reaction Co-precorrin-5B + S-adenosyl-L-methionine = Co-precorrin-6A + S-adenosyl-L-homocysteine. It functions in the pathway cofactor biosynthesis; adenosylcobalamin biosynthesis; cob(II)yrinate a,c-diamide from sirohydrochlorin (anaerobic route): step 6/10. Functionally, catalyzes the methylation of C-1 in cobalt-precorrin-5B to form cobalt-precorrin-6A. This chain is Cobalt-precorrin-5B C(1)-methyltransferase, found in Gloeobacter violaceus (strain ATCC 29082 / PCC 7421).